Here is a 138-residue protein sequence, read N- to C-terminus: ATP synthase epsilon chain (138 aa).

The protein belongs to the ATPase epsilon chain family. In terms of assembly, F-type ATPases have 2 components, CF(1) - the catalytic core - and CF(0) - the membrane proton channel. CF(1) has five subunits: alpha(3), beta(3), gamma(1), delta(1), epsilon(1). CF(0) has three main subunits: a, b and c.

The protein localises to the cell inner membrane. In terms of biological role, produces ATP from ADP in the presence of a proton gradient across the membrane. The sequence is that of ATP synthase epsilon chain from Polynucleobacter necessarius subsp. necessarius (strain STIR1).